We begin with the raw amino-acid sequence, 128 residues long: T-cell leukemia/lymphoma protein 1B (128 aa).

It belongs to the TCL1 family. In terms of assembly, interacts with AKT1 and AKT2 (via PH domain). Does not interact with AKT3. Expressed in a variety of tissues including placenta and testis.

Functionally, enhances the phosphorylation and activation of AKT1 and AKT2. The protein is T-cell leukemia/lymphoma protein 1B (TCL1B) of Homo sapiens (Human).